We begin with the raw amino-acid sequence, 330 residues long: Beta-ketoacyl-[acyl-carrier-protein] synthase III (330 aa).

Active-site residues include Cys-111 and His-249. The tract at residues 250–254 is ACP-binding; it reads QANTR. Asn-279 is an active-site residue.

It belongs to the thiolase-like superfamily. FabH family. As to quaternary structure, homodimer.

Its subcellular location is the cytoplasm. The enzyme catalyses malonyl-[ACP] + acetyl-CoA + H(+) = 3-oxobutanoyl-[ACP] + CO2 + CoA. It participates in lipid metabolism; fatty acid biosynthesis. Functionally, catalyzes the condensation reaction of fatty acid synthesis by the addition to an acyl acceptor of two carbons from malonyl-ACP. Catalyzes the first condensation reaction which initiates fatty acid synthesis and may therefore play a role in governing the total rate of fatty acid production. Possesses both acetoacetyl-ACP synthase and acetyl transacylase activities. Its substrate specificity determines the biosynthesis of branched-chain and/or straight-chain of fatty acids. This is Beta-ketoacyl-[acyl-carrier-protein] synthase III from Pseudomonas aeruginosa (strain LESB58).